We begin with the raw amino-acid sequence, 192 residues long: UPF0312 protein PputW619_0484 (192 aa).

An N-terminal signal peptide occupies residues 1 to 23 (MLKKTFAALALGTALLSAGQAMA).

Belongs to the UPF0312 family. Type 1 subfamily.

It localises to the periplasm. The polypeptide is UPF0312 protein PputW619_0484 (Pseudomonas putida (strain W619)).